A 517-amino-acid chain; its full sequence is AAA ATPase forming ring-shaped complexes (517 aa).

The stretch at 25–53 (ARNAKLVELLQASRTKLEEINGRLEALAE) forms a coiled coil. 233 to 238 (GNGKTL) serves as a coordination point for ATP.

Belongs to the AAA ATPase family. As to quaternary structure, homohexamer. Assembles into a hexameric ring structure.

The polypeptide is AAA ATPase forming ring-shaped complexes (Corynebacterium jeikeium (strain K411)).